Reading from the N-terminus, the 246-residue chain is Dof zinc finger protein DOF4.7 (246 aa).

2 stretches are compositionally biased toward polar residues: residues 1–12 (MMTSSHQSNTTG) and 27–37 (QINNKEPSPAT). The segment at 1–39 (MMTSSHQSNTTGFKPRRIKTTAKPPRQINNKEPSPATQP) is disordered. The Dof-type zinc finger occupies 41 to 95 (LKCPRCDSVNTKFCYYNNYSLSQPRHYCKNCRRYWTRGGALRNVPIGGSTRNKNK). 4 residues coordinate Zn(2+): Cys43, Cys46, Cys68, and Cys71. Residues 216-235 (GGATSGNHEDNDDGEGNLGN) form a disordered region.

In terms of assembly, interacts with ZFP2. As to expression, highly expressed at the base of all organs of the flower, especially in the abscission zone (AZ) of petals, stamens and sepals. Expressed at low levels in sepals, filaments, stigmatic papillae, tips of young siliques, and at the base of pedicels and leaf trichomes.

Its subcellular location is the nucleus. Functionally, transcription factor that binds specifically to a 5'-AA[AG]G-3' consensus core sequence. Involved in the negative regulation of floral organ abscission by binding to the typical DOF 5'-AAAG-3' sequences in the promoter of ADPG2/PGAZAT, and by down-regulating its expression. ADPG2/PGAZAT is an abscission-related and cell wall hydrolyzing polygalacturonase. May act through the interaction with ZFP2, an abscission-related transcription factor. In Arabidopsis thaliana (Mouse-ear cress), this protein is Dof zinc finger protein DOF4.7.